Here is a 151-residue protein sequence, read N- to C-terminus: Large ribosomal subunit protein bL9 (151 aa).

It belongs to the bacterial ribosomal protein bL9 family.

Binds to the 23S rRNA. This is Large ribosomal subunit protein bL9 from Chlorobium limicola (strain DSM 245 / NBRC 103803 / 6330).